Here is a 136-residue protein sequence, read N- to C-terminus: Histone H3.2 (136 aa).

Positions 1 to 43 (MARTKQTARKSTGGKAPRKQLATKAARKSAPATGGVKKPHRFR) are disordered. N6-methylated lysine is present on K5. Residue K10 is modified to N6-acetyllysine; alternate. K10 carries the post-translational modification N6-methylated lysine; alternate. Position 11 is a phosphoserine (S11). Position 12 is a phosphothreonine (T12). An N6-acetyllysine modification is found at K15. 2 positions are modified to N6-acetyllysine; alternate: K19 and K24. An N6-methylated lysine; alternate mark is found at K19 and K24. The residue at position 28 (K28) is an N6-methylated lysine. Position 29 is a phosphoserine (S29). K37 bears the N6-methylated lysine mark.

Belongs to the histone H3 family. In terms of assembly, the nucleosome is a histone octamer containing two molecules each of H2A, H2B, H3 and H4 assembled in one H3-H4 heterotetramer and two H2A-H2B heterodimers. The octamer wraps approximately 147 bp of DNA. In terms of processing, acetylation is generally linked to gene activation. Can be acetylated to form H3K9ac, H3K14ac, H3K18ac and H3K23ac. H3K9ac could compete with H3K9me and prevent gene silencing. H3K9ac is restricted to euchromatin. Post-translationally, methylated to form mainly H3K4me, H3K9me, H3K18me, H3K23me, H3K27me and H3K36me. H3K4me1/2/3, H3K9me3, H3K27me3 and H3K36me1/2/3 are typical marks for euchromatin, whereas heterochromatic chromocenters are enriched in H3K9me1/2 and H3K27me1/2. H2BK143ub1 is probably prerequisite for H3K4me. Can be phosphorylated to form H3S10ph, H3T11ph and H3S28ph.

Its subcellular location is the nucleus. The protein resides in the chromosome. Its function is as follows. Core component of nucleosome. Nucleosomes wrap and compact DNA into chromatin, limiting DNA accessibility to the cellular machineries which require DNA as a template. Histones thereby play a central role in transcription regulation, DNA repair, DNA replication and chromosomal stability. DNA accessibility is regulated via a complex set of post-translational modifications of histones, also called histone code, and nucleosome remodeling. The sequence is that of Histone H3.2 from Triticum aestivum (Wheat).